A 98-amino-acid chain; its full sequence is Class II hydrophobin 3 (98 aa).

The signal sequence occupies residues M1–A18. N-linked (GlcNAc...) asparagine glycans are attached at residues N26 and N54. 4 disulfides stabilise this stretch: C35–C83, C44–C74, C45–C57, and C84–C95.

This sequence belongs to the cerato-ulmin hydrophobin family.

The protein localises to the secreted. Its subcellular location is the cell wall. Functionally, aerial growth, conidiation, and dispersal of filamentous fungi in the environment rely upon a capability of their secreting small amphipathic proteins called hydrophobins (HPBs) with low sequence identity. Class I can self-assemble into an outermost layer of rodlet bundles on aerial cell surfaces, conferring cellular hydrophobicity that supports fungal growth, development and dispersal; whereas Class II form highly ordered films at water-air interfaces through intermolecular interactions but contribute nothing to the rodlet structure. In Botryotinia fuckeliana, hydrophobins are not involved in conferring surface hydrophobicity to conidia and aerial hyphae and their function in sclerotia and fruiting bodies remains to be investigated. This chain is Class II hydrophobin 3, found in Botryotinia fuckeliana (strain B05.10) (Noble rot fungus).